A 624-amino-acid polypeptide reads, in one-letter code: Pentatricopeptide repeat-containing protein At2g32630 (624 aa).

13 PPR repeats span residues 153 to 187 (FEKF…GLSI), 188 to 222 (DERS…GVKI), 223 to 257 (TVYS…GIKP), 258 to 292 (EAYT…GVVY), 293 to 327 (NKVT…GIES), 328 to 362 (DVHV…GLSP), 363 to 397 (SSYT…GVNI), 398 to 432 (TQVV…GFQA), 433 to 467 (DVFT…GVKL), 468 to 502 (STVS…GVQP), 503 to 537 (NAIT…GMDP), 538 to 572 (DSYT…GLDQ), and 573 to 607 (NSVT…GYTI).

This sequence belongs to the PPR family. P subfamily.

The chain is Pentatricopeptide repeat-containing protein At2g32630 from Arabidopsis thaliana (Mouse-ear cress).